A 33-amino-acid chain; its full sequence is Gastrin (33 aa).

Position 1 is a pyrrolidone carboxylic acid (glutamine 1). Tyrosine 28 carries the sulfotyrosine modification. A Phenylalanine amide modification is found at phenylalanine 33.

The protein belongs to the gastrin/cholecystokinin family. Post-translationally, sulfation enhances proteolytic processing, and blocks peptide degradation. Levels of sulfation differ between proteolytically-cleaved gastrins and between tissues.

The protein localises to the secreted. In terms of biological role, gastrin stimulates the stomach mucosa to produce and secrete hydrochloric acid and the pancreas to secrete its digestive enzymes. It also stimulates smooth muscle contraction and increases blood circulation and water secretion in the stomach and intestine. This Macropus giganteus (Eastern gray kangaroo) protein is Gastrin (GAST).